A 318-amino-acid chain; its full sequence is tRNA dimethylallyltransferase (318 aa).

16-23 (GPTASGKS) is a binding site for ATP. 18-23 (TASGKS) is a binding site for substrate. 2 interaction with substrate tRNA regions span residues 41–44 (DSRQ) and 165–169 (QRLIR).

Belongs to the IPP transferase family. In terms of assembly, monomer. The cofactor is Mg(2+).

The catalysed reaction is adenosine(37) in tRNA + dimethylallyl diphosphate = N(6)-dimethylallyladenosine(37) in tRNA + diphosphate. Its function is as follows. Catalyzes the transfer of a dimethylallyl group onto the adenine at position 37 in tRNAs that read codons beginning with uridine, leading to the formation of N6-(dimethylallyl)adenosine (i(6)A). The sequence is that of tRNA dimethylallyltransferase from Pelodictyon phaeoclathratiforme (strain DSM 5477 / BU-1).